A 418-amino-acid polypeptide reads, in one-letter code: Tyrosine--tRNA ligase (418 aa).

Tyr34 serves as a coordination point for L-tyrosine. The 'HIGH' region motif lies at 39 to 48 (PTADSLHLGH). 2 residues coordinate L-tyrosine: Tyr169 and Gln173. Positions 229 to 233 (KFGKS) match the 'KMSKS' region motif. Residue Lys232 participates in ATP binding. Residues 352–418 (LNIVEILVSS…GKKKYAVLTY (67 aa)) enclose the S4 RNA-binding domain.

It belongs to the class-I aminoacyl-tRNA synthetase family. TyrS type 1 subfamily. In terms of assembly, homodimer.

The protein resides in the cytoplasm. It carries out the reaction tRNA(Tyr) + L-tyrosine + ATP = L-tyrosyl-tRNA(Tyr) + AMP + diphosphate + H(+). Functionally, catalyzes the attachment of tyrosine to tRNA(Tyr) in a two-step reaction: tyrosine is first activated by ATP to form Tyr-AMP and then transferred to the acceptor end of tRNA(Tyr). The chain is Tyrosine--tRNA ligase from Streptococcus uberis (strain ATCC BAA-854 / 0140J).